We begin with the raw amino-acid sequence, 99 residues long: Aspartyl/glutamyl-tRNA(Asn/Gln) amidotransferase subunit C (99 aa).

Belongs to the GatC family. As to quaternary structure, heterotrimer of A, B and C subunits.

The enzyme catalyses L-glutamyl-tRNA(Gln) + L-glutamine + ATP + H2O = L-glutaminyl-tRNA(Gln) + L-glutamate + ADP + phosphate + H(+). It catalyses the reaction L-aspartyl-tRNA(Asn) + L-glutamine + ATP + H2O = L-asparaginyl-tRNA(Asn) + L-glutamate + ADP + phosphate + 2 H(+). In terms of biological role, allows the formation of correctly charged Asn-tRNA(Asn) or Gln-tRNA(Gln) through the transamidation of misacylated Asp-tRNA(Asn) or Glu-tRNA(Gln) in organisms which lack either or both of asparaginyl-tRNA or glutaminyl-tRNA synthetases. The reaction takes place in the presence of glutamine and ATP through an activated phospho-Asp-tRNA(Asn) or phospho-Glu-tRNA(Gln). This chain is Aspartyl/glutamyl-tRNA(Asn/Gln) amidotransferase subunit C, found in Cupriavidus taiwanensis (strain DSM 17343 / BCRC 17206 / CCUG 44338 / CIP 107171 / LMG 19424 / R1) (Ralstonia taiwanensis (strain LMG 19424)).